A 324-amino-acid polypeptide reads, in one-letter code: Phosphate transport system permease protein PstC 2 (324 aa).

The next 6 membrane-spanning stretches (helical) occupy residues 30–50 (ASAAGSTIVIAILLIAIFLLV), 90–110 (LSSITALVLAVPVAVGIAVFL), 125–145 (MVDLLAAVPSIIFGLWGIFVL), 174–194 (AGGGTIFTAGIVLSVMILPIV), 237–257 (VAASMLGLGRALGETVAVLVI), and 290–310 (PLPTGAYISAGFALFVLTFLV). Residues 85–314 (FMVTALSSIT…VLTFLVNAAA (230 aa)) form the ABC transmembrane type-1 domain.

The protein belongs to the binding-protein-dependent transport system permease family. CysTW subfamily.

It is found in the cell membrane. Functionally, part of the binding-protein-dependent transport system for phosphate; probably responsible for the translocation of the substrate across the membrane. This chain is Phosphate transport system permease protein PstC 2 (pstC2), found in Mycobacterium bovis (strain ATCC BAA-935 / AF2122/97).